The sequence spans 284 residues: Formamidopyrimidine-DNA glycosylase (284 aa).

P2 functions as the Schiff-base intermediate with DNA in the catalytic mechanism. E3 functions as the Proton donor in the catalytic mechanism. K60 acts as the Proton donor; for beta-elimination activity in catalysis. DNA-binding residues include H99, R118, and R163. The FPG-type zinc finger occupies 248-282 (WVYGRQGQPCRTCGQTIERIKLVGRSTHFCPQCQP). Catalysis depends on R272, which acts as the Proton donor; for delta-elimination activity.

This sequence belongs to the FPG family. Monomer. The cofactor is Zn(2+).

The catalysed reaction is Hydrolysis of DNA containing ring-opened 7-methylguanine residues, releasing 2,6-diamino-4-hydroxy-5-(N-methyl)formamidopyrimidine.. It catalyses the reaction 2'-deoxyribonucleotide-(2'-deoxyribose 5'-phosphate)-2'-deoxyribonucleotide-DNA = a 3'-end 2'-deoxyribonucleotide-(2,3-dehydro-2,3-deoxyribose 5'-phosphate)-DNA + a 5'-end 5'-phospho-2'-deoxyribonucleoside-DNA + H(+). In terms of biological role, involved in base excision repair of DNA damaged by oxidation or by mutagenic agents. Acts as a DNA glycosylase that recognizes and removes damaged bases. Has a preference for oxidized purines, such as 7,8-dihydro-8-oxoguanine (8-oxoG). Has AP (apurinic/apyrimidinic) lyase activity and introduces nicks in the DNA strand. Cleaves the DNA backbone by beta-delta elimination to generate a single-strand break at the site of the removed base with both 3'- and 5'-phosphates. The sequence is that of Formamidopyrimidine-DNA glycosylase from Acaryochloris marina (strain MBIC 11017).